The following is a 431-amino-acid chain: Tyrosine--tRNA ligase (431 aa).

Tyr34 contributes to the L-tyrosine binding site. Residues 39–48 carry the 'HIGH' region motif; that stretch reads PTADSLHIGH. 2 residues coordinate L-tyrosine: Tyr171 and Gln175. Positions 231–235 match the 'KMSKS' region motif; sequence KFGKT. Position 234 (Lys234) interacts with ATP. An S4 RNA-binding domain is found at 353 to 422; it reads INVVEALVKT…GKYTILRRGK (70 aa).

Belongs to the class-I aminoacyl-tRNA synthetase family. TyrS type 1 subfamily. Homodimer.

The protein localises to the cytoplasm. It catalyses the reaction tRNA(Tyr) + L-tyrosine + ATP = L-tyrosyl-tRNA(Tyr) + AMP + diphosphate + H(+). Catalyzes the attachment of tyrosine to tRNA(Tyr) in a two-step reaction: tyrosine is first activated by ATP to form Tyr-AMP and then transferred to the acceptor end of tRNA(Tyr). The chain is Tyrosine--tRNA ligase from Neisseria meningitidis serogroup A / serotype 4A (strain DSM 15465 / Z2491).